The primary structure comprises 234 residues: Putative ankyrin repeat protein RF_0063 (234 aa).

ANK repeat units lie at residues 149–180 (NNNT…TISI) and 184–213 (YNNT…QKAL).

This chain is Putative ankyrin repeat protein RF_0063, found in Rickettsia felis (strain ATCC VR-1525 / URRWXCal2) (Rickettsia azadi).